The following is a 110-amino-acid chain: U1-lycotoxin-Ls1bb (110 aa).

The N-terminal stretch at 1 to 20 (MKFVLLFGVLLVTLFSYSSA) is a signal peptide. A propeptide spanning residues 21-44 (EMLDDFDQADEDELLSLIEKEEAR) is cleaved from the precursor. Intrachain disulfides connect Cys-47–Cys-62, Cys-54–Cys-71, Cys-61–Cys-89, and Cys-73–Cys-87.

It belongs to the neurotoxin 19 (CSTX) family. 03 subfamily. In terms of tissue distribution, expressed by the venom gland.

The protein localises to the secreted. This chain is U1-lycotoxin-Ls1bb, found in Lycosa singoriensis (Wolf spider).